Reading from the N-terminus, the 453-residue chain is Bifunctional protein GlmU (453 aa).

The interval 1–231 (MERTCLAVIL…EIEMTGCNTR (231 aa)) is pyrophosphorylase. UDP-N-acetyl-alpha-D-glucosamine-binding positions include 10 to 13 (LAAG), lysine 24, glutamine 77, 82 to 83 (GT), 105 to 107 (YGD), glycine 143, glutamate 157, asparagine 172, and asparagine 229. Aspartate 107 contributes to the Mg(2+) binding site. Asparagine 229 contacts Mg(2+). The interval 232–252 (AELAVIERFWQERRRHQMMLS) is linker. Positions 253–453 (GVTMIAPETV…AIKAAKKAKA (201 aa)) are N-acetyltransferase. UDP-N-acetyl-alpha-D-glucosamine-binding residues include arginine 318 and lysine 336. The active-site Proton acceptor is the histidine 348. UDP-N-acetyl-alpha-D-glucosamine-binding residues include tyrosine 351 and asparagine 362. Residues alanine 365, 371–372 (NY), serine 390, serine 408, and arginine 425 each bind acetyl-CoA.

The protein in the N-terminal section; belongs to the N-acetylglucosamine-1-phosphate uridyltransferase family. This sequence in the C-terminal section; belongs to the transferase hexapeptide repeat family. Homotrimer. Requires Mg(2+) as cofactor.

It localises to the cytoplasm. The enzyme catalyses alpha-D-glucosamine 1-phosphate + acetyl-CoA = N-acetyl-alpha-D-glucosamine 1-phosphate + CoA + H(+). It carries out the reaction N-acetyl-alpha-D-glucosamine 1-phosphate + UTP + H(+) = UDP-N-acetyl-alpha-D-glucosamine + diphosphate. It participates in nucleotide-sugar biosynthesis; UDP-N-acetyl-alpha-D-glucosamine biosynthesis; N-acetyl-alpha-D-glucosamine 1-phosphate from alpha-D-glucosamine 6-phosphate (route II): step 2/2. The protein operates within nucleotide-sugar biosynthesis; UDP-N-acetyl-alpha-D-glucosamine biosynthesis; UDP-N-acetyl-alpha-D-glucosamine from N-acetyl-alpha-D-glucosamine 1-phosphate: step 1/1. It functions in the pathway bacterial outer membrane biogenesis; LPS lipid A biosynthesis. Its function is as follows. Catalyzes the last two sequential reactions in the de novo biosynthetic pathway for UDP-N-acetylglucosamine (UDP-GlcNAc). The C-terminal domain catalyzes the transfer of acetyl group from acetyl coenzyme A to glucosamine-1-phosphate (GlcN-1-P) to produce N-acetylglucosamine-1-phosphate (GlcNAc-1-P), which is converted into UDP-GlcNAc by the transfer of uridine 5-monophosphate (from uridine 5-triphosphate), a reaction catalyzed by the N-terminal domain. The polypeptide is Bifunctional protein GlmU (Rhizobium johnstonii (strain DSM 114642 / LMG 32736 / 3841) (Rhizobium leguminosarum bv. viciae)).